The chain runs to 204 residues: Octanoyltransferase (204 aa).

The region spanning 30 to 204 (CETPDEIWLL…QSFINQLTDV (175 aa)) is the BPL/LPL catalytic domain. Substrate is bound by residues 69–76 (RGGQITYH), 136–138 (SLG), and 149–151 (GIA). Catalysis depends on Cys-167, which acts as the Acyl-thioester intermediate.

It belongs to the LipB family.

Its subcellular location is the cytoplasm. The catalysed reaction is octanoyl-[ACP] + L-lysyl-[protein] = N(6)-octanoyl-L-lysyl-[protein] + holo-[ACP] + H(+). Its pathway is protein modification; protein lipoylation via endogenous pathway; protein N(6)-(lipoyl)lysine from octanoyl-[acyl-carrier-protein]: step 1/2. Functionally, catalyzes the transfer of endogenously produced octanoic acid from octanoyl-acyl-carrier-protein onto the lipoyl domains of lipoate-dependent enzymes. Lipoyl-ACP can also act as a substrate although octanoyl-ACP is likely to be the physiological substrate. This chain is Octanoyltransferase, found in Nitrosomonas europaea (strain ATCC 19718 / CIP 103999 / KCTC 2705 / NBRC 14298).